A 72-amino-acid polypeptide reads, in one-letter code: SRY-related protein MG44 (72 aa).

The HMG box DNA-binding region spans 1–69; that stretch reads VKRPMNAFMV…KHMADYPNYK (69 aa).

It is found in the nucleus. The protein is SRY-related protein MG44 of Tarentola mauritanica (Common wall gecko).